The primary structure comprises 1314 residues: Condensin-2 complex subunit CAP-D3 (1314 aa).

HEAT repeat units follow at residues 20 to 58, 98 to 136, 184 to 222, 231 to 267, 269 to 310, 331 to 360, 361 to 398, 417 to 455, 457 to 493, and 494 to 532; these read ESDY…SFLR, PIAF…KKRG, KSLV…GVLN, TAAE…SLAK, NPEL…AMEV, RVLA…GLKD, SWGL…FLSG, SEGK…LMGG, FDGS…ICTD, and EIVT…ERIL. A disordered region spans residues 116–150; sequence DDSAGQGSNSQREKGNKKKRGRGKRNLGYEDGEET. Residues 130-140 are compositionally biased toward basic residues; it reads GNKKKRGRGKR. The Nuclear localization signal motif lies at 789–796; the sequence is SRRSKRLD. HEAT repeat units lie at residues 821–859, 878–916, 917–954, 956–992, 1053–1091, and 1138–1179; these read SADT…KQKA, GKLA…VHYT, AMIE…RDYV, WRGV…VKAP, QMAP…SVLQ, and KGLI…DYKN. Disordered stretches follow at residues 1210-1237 and 1265-1314; these read MANQ…ENVR and VNGG…DDES.

As to quaternary structure, component of the condensin-2 complex. As to expression, present in buds.

The protein localises to the nucleus. The protein resides in the chromosome. In terms of biological role, regulatory subunit of the condensin-2 complex, a complex which establishes mitotic chromosome architecture and is involved in physical rigidity of the chromatid axis. May promote the resolution of double-strand DNA catenanes (intertwines) between sister chromatids. Required for plant vigor, fertility, chromatin condensation and sister chromatid cohesion both during mitosis and meiosis. Necessary to maintain normal structural integrity of the meiotic chromosomes during the two nuclear divisions of gametogenesis, especially to prevent interchromosome connections at metaphase I. Seems also involved in crossover formation during meiotic prophase I. Prevents centromeric and pericentromeric heterochromatin repeats association. In Arabidopsis thaliana (Mouse-ear cress), this protein is Condensin-2 complex subunit CAP-D3.